A 310-amino-acid polypeptide reads, in one-letter code: U-megalopygitoxin(8)-Mo15 (310 aa).

The signal sequence occupies residues 1 to 27 (MARFSSKNLTKLFQYLVLSLLSPVAFG).

It belongs to the megalysin family. Post-translationally, contains 3 disulfide bonds. Expressed by the venom apparatus.

It is found in the secreted. The protein localises to the target cell membrane. Functionally, may function as a large pore-forming protein. The chain is U-megalopygitoxin(8)-Mo15 from Megalopyge opercularis (Southern flannel moth).